A 468-amino-acid polypeptide reads, in one-letter code: tRNA threonylcarbamoyladenosine dehydratase (468 aa).

3 helical membrane passes run 15-35 (FWIAVSSSVTTACVILGTLEF), 109-129 (NSFVIVVGCGGVGSWVINMLA), and 315-335 (ILPVIGPMPGIFGLTIATYVL).

It belongs to the HesA/MoeB/ThiF family.

It is found in the mitochondrion outer membrane. In terms of biological role, catalyzes the ATP-dependent dehydration of threonylcarbamoyladenosine at position 37 (t(6)A37) to form cyclic t(6)A37 (ct(6)A37) in tRNAs that read codons beginning with adenine. The sequence is that of tRNA threonylcarbamoyladenosine dehydratase (tcd1) from Schizosaccharomyces pombe (strain 972 / ATCC 24843) (Fission yeast).